The chain runs to 299 residues: N-acetylmuramic acid 6-phosphate etherase (299 aa).

The SIS domain occupies 54 to 217; the sequence is TIAQYKKGGR…STITMVGVGK (164 aa). Glu82 acts as the Proton donor in catalysis. Residue Glu113 is part of the active site.

This sequence belongs to the GCKR-like family. MurNAc-6-P etherase subfamily. As to quaternary structure, homodimer.

It catalyses the reaction N-acetyl-D-muramate 6-phosphate + H2O = N-acetyl-D-glucosamine 6-phosphate + (R)-lactate. The protein operates within amino-sugar metabolism; N-acetylmuramate degradation. Specifically catalyzes the cleavage of the D-lactyl ether substituent of MurNAc 6-phosphate, producing GlcNAc 6-phosphate and D-lactate. This chain is N-acetylmuramic acid 6-phosphate etherase, found in Staphylococcus aureus (strain bovine RF122 / ET3-1).